Consider the following 204-residue polypeptide: FMN-dependent NADH:quinone oxidoreductase (204 aa).

Residues Ser9, 15–17, and 97–100 each bind FMN; these read SVS and MYNF.

The protein belongs to the azoreductase type 1 family. Homodimer. It depends on FMN as a cofactor.

The catalysed reaction is 2 a quinone + NADH + H(+) = 2 a 1,4-benzosemiquinone + NAD(+). It carries out the reaction N,N-dimethyl-1,4-phenylenediamine + anthranilate + 2 NAD(+) = 2-(4-dimethylaminophenyl)diazenylbenzoate + 2 NADH + 2 H(+). Functionally, quinone reductase that provides resistance to thiol-specific stress caused by electrophilic quinones. Also exhibits azoreductase activity. Catalyzes the reductive cleavage of the azo bond in aromatic azo compounds to the corresponding amines. The polypeptide is FMN-dependent NADH:quinone oxidoreductase (Methylobacterium radiotolerans (strain ATCC 27329 / DSM 1819 / JCM 2831 / NBRC 15690 / NCIMB 10815 / 0-1)).